Reading from the N-terminus, the 459-residue chain is Argininosuccinate lyase (459 aa).

Belongs to the lyase 1 family. Argininosuccinate lyase subfamily.

It is found in the cytoplasm. It catalyses the reaction 2-(N(omega)-L-arginino)succinate = fumarate + L-arginine. It functions in the pathway amino-acid biosynthesis; L-arginine biosynthesis; L-arginine from L-ornithine and carbamoyl phosphate: step 3/3. The protein is Argininosuccinate lyase of Geobacillus kaustophilus (strain HTA426).